Consider the following 258-residue polypeptide: tRNA pseudouridine synthase A (258 aa).

Asp-52 acts as the Nucleophile in catalysis. Position 110 (Tyr-110) interacts with substrate.

The protein belongs to the tRNA pseudouridine synthase TruA family. Homodimer.

It carries out the reaction uridine(38/39/40) in tRNA = pseudouridine(38/39/40) in tRNA. Functionally, formation of pseudouridine at positions 38, 39 and 40 in the anticodon stem and loop of transfer RNAs. This is tRNA pseudouridine synthase A from Francisella tularensis subsp. holarctica (strain FTNF002-00 / FTA).